Here is a 371-residue protein sequence, read N- to C-terminus: Cytochrome b (371 aa).

Helical transmembrane passes span 32-52 (VGFS…CLAW), 76-98 (FVIR…VHIF), 113-133 (VWAV…IGYV), and 179-199 (LHVL…MHLF). The heme b site is built by histidine 82 and histidine 96. Residues histidine 183 and histidine 197 each coordinate heme b. Histidine 202 is a binding site for a ubiquinone. Transmembrane regions (helical) follow at residues 227 to 247 (FYLR…YFIF), 296 to 316 (LMVI…LWFV), 329 to 349 (LILF…ILAY), and 350 to 370 (PIWM…VCRL).

This sequence belongs to the cytochrome b family. The main subunits of complex b-c1 are: cytochrome b, cytochrome c1 and the Rieske protein. The cofactor is heme b.

It is found in the mitochondrion inner membrane. Functionally, component of the ubiquinol-cytochrome c reductase complex (complex III or cytochrome b-c1 complex) that is part of the mitochondrial respiratory chain. The b-c1 complex mediates electron transfer from ubiquinol to cytochrome c. Contributes to the generation of a proton gradient across the mitochondrial membrane that is then used for ATP synthesis. This chain is Cytochrome b (MT-CYB), found in Leishmania tarentolae (Sauroleishmania tarentolae).